The primary structure comprises 844 residues: Probable serine/threonine-protein kinase DDB_G0267566 (844 aa).

2 ANK repeats span residues 335–367 (KGDTALHNTIKNLKKESGPMVAALLSCGANANI) and 371–400 (KHKVPLHFAIEFGDESIIKILLAFGAKPFL). Residues 508 to 773 (SELGKLIGKG…FEVFQKLKKV (266 aa)) form the Protein kinase domain. Residues 514 to 522 (IGKGANGKV) and lysine 539 contribute to the ATP site. The active-site Proton acceptor is aspartate 634.

This sequence belongs to the protein kinase superfamily. Ser/Thr protein kinase family.

The enzyme catalyses L-seryl-[protein] + ATP = O-phospho-L-seryl-[protein] + ADP + H(+). It catalyses the reaction L-threonyl-[protein] + ATP = O-phospho-L-threonyl-[protein] + ADP + H(+). This is Probable serine/threonine-protein kinase DDB_G0267566 from Dictyostelium discoideum (Social amoeba).